A 363-amino-acid polypeptide reads, in one-letter code: Aspartate carbamoyltransferase, chloroplastic (363 aa).

Residues 1 to 21 (MAAARATLPLPRVPAPSPRPQ) are disordered. Residues 1 to 36 (MAAARATLPLPRVPAPSPRPQLRPFPSLPARRGAVA) constitute a chloroplast transit peptide. The span at 11–21 (PRVPAPSPRPQ) shows a compositional bias: pro residues. The carbamoyl phosphate site is built by Arg-109 and Thr-110. UMP-binding residues include Arg-109 and Thr-110. Lys-139 lines the L-aspartate pocket. Positions 160, 188, and 191 each coordinate carbamoyl phosphate. Residues Arg-160 and His-188 each contribute to the UMP site. Positions 221 and 283 each coordinate UMP. L-aspartate-binding residues include Arg-221 and Arg-283. Carbamoyl phosphate contacts are provided by Leu-323 and Pro-324.

Belongs to the aspartate/ornithine carbamoyltransferase superfamily. ATCase family. As to quaternary structure, homotrimer.

It localises to the plastid. Its subcellular location is the chloroplast. It catalyses the reaction carbamoyl phosphate + L-aspartate = N-carbamoyl-L-aspartate + phosphate + H(+). It participates in pyrimidine metabolism; UMP biosynthesis via de novo pathway; (S)-dihydroorotate from bicarbonate: step 2/3. With respect to regulation, feedback inhibited by UMP. Its function is as follows. Catalyzes the condensation of carbamoyl phosphate and aspartate to form carbamoyl aspartate and inorganic phosphate, the committed step in the de novo pyrimidine nucleotide biosynthesis pathway. The sequence is that of Aspartate carbamoyltransferase, chloroplastic (PYRB) from Oryza sativa subsp. japonica (Rice).